The primary structure comprises 469 residues: Arginine biosynthesis bifunctional protein ArgJ, mitochondrial (469 aa).

Residues T199, K228, T239, E325, N464, and T469 each coordinate substrate. Residue T239 is the Nucleophile of the active site.

Belongs to the ArgJ family. Heterodimer of an alpha and a beta chain. Post-translationally, the alpha and beta chains are autoproteolytically processed from a single precursor protein within the mitochondrion.

The protein localises to the mitochondrion matrix. The enzyme catalyses N(2)-acetyl-L-ornithine + L-glutamate = N-acetyl-L-glutamate + L-ornithine. It carries out the reaction L-glutamate + acetyl-CoA = N-acetyl-L-glutamate + CoA + H(+). The protein operates within amino-acid biosynthesis; L-arginine biosynthesis; L-ornithine and N-acetyl-L-glutamate from L-glutamate and N(2)-acetyl-L-ornithine (cyclic): step 1/1. Its pathway is amino-acid biosynthesis; L-arginine biosynthesis; N(2)-acetyl-L-ornithine from L-glutamate: step 1/4. In terms of biological role, catalyzes two activities which are involved in the cyclic version of arginine biosynthesis: the synthesis of acetylglutamate from glutamate and acetyl-CoA, and of ornithine by transacetylation between acetylornithine and glutamate. This Sordaria macrospora (strain ATCC MYA-333 / DSM 997 / K(L3346) / K-hell) protein is Arginine biosynthesis bifunctional protein ArgJ, mitochondrial.